The chain runs to 276 residues: NH(3)-dependent NAD(+) synthetase (276 aa).

47 to 54 (GISGGQDS) is an ATP binding site. D53 serves as a coordination point for Mg(2+). R141 contributes to the deamido-NAD(+) binding site. T161 is a binding site for ATP. A Mg(2+)-binding site is contributed by E166. Residues K174 and D181 each coordinate deamido-NAD(+). ATP is bound by residues K190 and T212. 261-262 (HK) contributes to the deamido-NAD(+) binding site.

Belongs to the NAD synthetase family. As to quaternary structure, homodimer.

The catalysed reaction is deamido-NAD(+) + NH4(+) + ATP = AMP + diphosphate + NAD(+) + H(+). It participates in cofactor biosynthesis; NAD(+) biosynthesis; NAD(+) from deamido-NAD(+) (ammonia route): step 1/1. In terms of biological role, catalyzes the ATP-dependent amidation of deamido-NAD to form NAD. Uses ammonia as a nitrogen source. This Levilactobacillus brevis (strain ATCC 367 / BCRC 12310 / CIP 105137 / JCM 1170 / LMG 11437 / NCIMB 947 / NCTC 947) (Lactobacillus brevis) protein is NH(3)-dependent NAD(+) synthetase.